We begin with the raw amino-acid sequence, 478 residues long: UDP-N-acetylmuramate--L-alanine ligase (478 aa).

Residue 120–126 (GSHGKTT) coordinates ATP.

It belongs to the MurCDEF family.

The protein resides in the cytoplasm. It catalyses the reaction UDP-N-acetyl-alpha-D-muramate + L-alanine + ATP = UDP-N-acetyl-alpha-D-muramoyl-L-alanine + ADP + phosphate + H(+). It participates in cell wall biogenesis; peptidoglycan biosynthesis. Its function is as follows. Cell wall formation. This Rickettsia bellii (strain OSU 85-389) protein is UDP-N-acetylmuramate--L-alanine ligase.